Consider the following 213-residue polypeptide: uncharacterized protein (213 aa).

A signal peptide spans 1–21 (MKKILFLTVICFCLSSIKAYA).

This is an uncharacterized protein from Rickettsia prowazekii (strain Madrid E).